The chain runs to 727 residues: NADH-ubiquinone oxidoreductase 75 kDa subunit, mitochondrial (727 aa).

A mitochondrion-targeting transit peptide spans 1–23 (MLRIPVKRALIGLSKSPKGYVRS). One can recognise a 2Fe-2S ferredoxin-type domain in the interval 30–108 (NLIEVFVDGQ…GWNILTNSEK (79 aa)). [2Fe-2S] cluster is bound by residues cysteine 64, cysteine 75, and cysteine 78. Lysine 84 bears the N6-acetyllysine mark. Residue cysteine 92 coordinates [2Fe-2S] cluster. Residues 108 to 147 (KSKKAREGVMEFLLANHPLDCPICDQGGECDLQDQSMMFG) enclose the 4Fe-4S His(Cys)3-ligated-type domain. [4Fe-4S] cluster contacts are provided by histidine 124, cysteine 128, cysteine 131, cysteine 137, cysteine 176, cysteine 179, cysteine 182, and cysteine 226. Residues 245–301 (TRKTESIDVMDAVGSNIVVSTRTGEVMRILPRMHEDINEEWISDKTRFAYDGLKRQR) enclose the 4Fe-4S Mo/W bis-MGD-type domain. Lysine 499 and lysine 709 each carry N6-acetyllysine.

It belongs to the complex I 75 kDa subunit family. In terms of assembly, core subunit of respiratory chain NADH dehydrogenase (Complex I) which is composed of 45 different subunits. This is the largest subunit of complex I and it is a component of the iron-sulfur (IP) fragment of the enzyme. Complex I associates with ubiquinol-cytochrome reductase complex (Complex III) to form supercomplexes. Interacts with MDM2 and AKAP1. It depends on [2Fe-2S] cluster as a cofactor. [4Fe-4S] cluster serves as cofactor.

The protein resides in the mitochondrion inner membrane. The enzyme catalyses a ubiquinone + NADH + 5 H(+)(in) = a ubiquinol + NAD(+) + 4 H(+)(out). In terms of biological role, core subunit of the mitochondrial membrane respiratory chain NADH dehydrogenase (Complex I) which catalyzes electron transfer from NADH through the respiratory chain, using ubiquinone as an electron acceptor. Essential for catalysing the entry and efficient transfer of electrons within complex I. Plays a key role in the assembly and stability of complex I and participates in the association of complex I with ubiquinol-cytochrome reductase complex (Complex III) to form supercomplexes. This is NADH-ubiquinone oxidoreductase 75 kDa subunit, mitochondrial (Ndufs1) from Rattus norvegicus (Rat).